The primary structure comprises 521 residues: Myocyte-specific enhancer factor 2D (521 aa).

In terms of domain architecture, MADS-box spans 3-57 (RKKIQIQRITDERNRQVTFTKRKFGLMKKAYELSVLCDCEIALIIFNHSNKLFQY). Residues 58–86 (ASTDMDKVLLKYTEYNEPHESRTNADIIE) constitute a DNA-binding region (mef2-type). Ser98, Ser106, and Ser110 each carry phosphoserine. Ser121 bears the Phosphoserine; by PKA mark. Positions 174–207 (TDPRLLSPQQPALQRNSVSPGLPQRPASAGAMLG) are disordered. Residue Ser180 is modified to Phosphoserine; by MAPK7. Positions 180–192 (SPQQPALQRNSVS) are enriched in polar residues. Ser190 bears the Phosphoserine; by PKA mark. Ser231 bears the Phosphoserine mark. The tract at residues 244–266 (NKVIPAKSPPPPTHSTQLGAPSR) is disordered. An N6-acetyllysine modification is found at Lys245. At Ser251 the chain carries Phosphoserine. Residues 286–292 (TEDHLDL) form a beta domain region. Disordered stretches follow at residues 357 to 407 (SLGN…QSHL) and 437 to 521 (SIKS…WTLK). A compositionally biased stretch (pro residues) spans 373–400 (PQQPQPPQQQPPQPQQPQPQQPQQPQQP). An N6-acetyllysine; alternate modification is found at Lys439. Lys439 is covalently cross-linked (Glycyl lysine isopeptide (Lys-Gly) (interchain with G-Cter in SUMO); alternate). Position 444 is a phosphoserine (Ser444).

It belongs to the MEF2 family. As to quaternary structure, interacts with MYOG. Forms a complex with class II HDACs in undifferentiating cells. On myogenic differentiation, HDACs are released into the cytoplasm allowing MEF2s to interact with other proteins for activation. Interacts with HDAC4 (in undifferentiating cells); the interaction translocates MEF2D to nuclear dots. Forms a heterodimer with MEF2A. Interacts with MAPK7; the interaction phosphorylates but does not activate MEF2D. Interacts with CCAR2 and HDAC3. Phosphorylated on Ser-444 by CDK5 is required for Lys-439 sumoylation and inhibits transcriptional activity. In neurons, enhanced CDK5 activity induced by neurotoxins promotes caspase 3-mediated cleavage leading to neuron apoptosis. Phosphorylation on Ser-180 can be enhanced by EGF. Phosphorylated and activated by CaMK4. Post-translationally, acetylated on Lys-439 by CREBBP. Acetylated by EP300. Deacetylated by SIRT1 and HDAC3. In terms of processing, sumoylated on Lys-439 with SUMO2 but not SUMO1; which inhibits transcriptional activity and myogenic activity. Desumoylated by SENP3. Proteolytically cleaved in cerebellar granule neurons on several sites by caspase 7 following neurotoxicity. Preferentially cleaves the CDK5-mediated hyperphosphorylated form which leads to neuron apoptosis and transcriptional inactivation.

Its subcellular location is the nucleus. Its function is as follows. Transcriptional activator which binds specifically to the MEF2 element, 5'-YTA[AT](4)TAR-3', found in numerous muscle-specific, growth factor- and stress-induced genes. Mediates cellular functions not only in skeletal and cardiac muscle development, but also in neuronal differentiation and survival. Plays diverse roles in the control of cell growth, survival and apoptosis via p38 MAPK signaling in muscle-specific and/or growth factor-related transcription. Plays a critical role in the regulation of neuronal apoptosis. The polypeptide is Myocyte-specific enhancer factor 2D (MEF2D) (Homo sapiens (Human)).